The primary structure comprises 315 residues: Acetyl-coenzyme A carboxylase carboxyl transferase subunit alpha (315 aa).

The CoA carboxyltransferase C-terminal domain occupies Glu-32–Glu-289.

The protein belongs to the AccA family. Acetyl-CoA carboxylase is a heterohexamer composed of biotin carboxyl carrier protein (AccB), biotin carboxylase (AccC) and two subunits each of ACCase subunit alpha (AccA) and ACCase subunit beta (AccD).

It localises to the cytoplasm. It carries out the reaction N(6)-carboxybiotinyl-L-lysyl-[protein] + acetyl-CoA = N(6)-biotinyl-L-lysyl-[protein] + malonyl-CoA. It functions in the pathway lipid metabolism; malonyl-CoA biosynthesis; malonyl-CoA from acetyl-CoA: step 1/1. Functionally, component of the acetyl coenzyme A carboxylase (ACC) complex. First, biotin carboxylase catalyzes the carboxylation of biotin on its carrier protein (BCCP) and then the CO(2) group is transferred by the carboxyltransferase to acetyl-CoA to form malonyl-CoA. This Staphylococcus carnosus (strain TM300) protein is Acetyl-coenzyme A carboxylase carboxyl transferase subunit alpha.